Consider the following 432-residue polypeptide: Patatin-like phospholipase domain-containing protein 5 (432 aa).

Residues 12–181 enclose the PNPLA domain; sequence LSFSGSGYMG…SNNLPFSDCP (170 aa). The short motif at 16–21 is the GXGXXG element; the sequence is GSGYMG. Positions 47 to 51 match the GXSXG motif; the sequence is GSSSG. Residue Ser49 is the Nucleophile of the active site. Asp168 serves as the catalytic Proton acceptor. The DGA/G motif lies at 168–170; that stretch reads DGA. A disordered region spans residues 404-423; sequence ADSGLLRQQRGTAPSGNRPL.

It catalyses the reaction a triacylglycerol + H2O = a diacylglycerol + a fatty acid + H(+). Its function is as follows. Has abundant triacylglycerol lipase activity. The polypeptide is Patatin-like phospholipase domain-containing protein 5 (Mus musculus (Mouse)).